A 57-amino-acid chain; its full sequence is MKPAVDEMFPEGAGPYVDLDEAGGSSGLLMDLAADEKAVHADFFNDFEDLFDDEDIQ.

It belongs to the CSN9 family. As to quaternary structure, component of the CSN complex, probably composed of cops1, cops2, cops3, cops4, cops5, cops6, cops7, cops8 and cops9.

The protein resides in the nucleus. Its subcellular location is the cytoplasm. The protein localises to the nucleoplasm. Component of the COP9 signalosome complex (CSN), a complex involved in various cellular and developmental processes. The CSN complex is an essential regulator of the ubiquitin (Ubl) conjugation pathway by mediating the deneddylation of the cullin subunits of SCF-type E3 ligase complexes, leading to decrease the Ubl ligase activity. May play a role in cell proliferation. This is COP9 signalosome complex subunit 9 from Xenopus laevis (African clawed frog).